The chain runs to 541 residues: Sorting nexin-27 (541 aa).

A disordered region spans residues 1–26 (MADEDGEGIHPAAPHRNGGGGGGGGS). The segment covering 17–26 (NGGGGGGGGS) has biased composition (gly residues). A PDZ domain is found at 43–136 (VVRIVKSESG…ELILTVLSVP (94 aa)). Phosphoserine is present on residues Ser-51 and Ser-62. The 109-residue stretch at 161 to 269 (QAVPISVPTY…EFLSESDENY (109 aa)) folds into the PX domain. Positions 273–362 (SDVELRVALP…TCLTIRKWLF (90 aa)) constitute a Ras-associating domain. Positions 273 to 362 (SDVELRVALP…TCLTIRKWLF (90 aa)) are FERM-like region F1. Residues 373 to 421 (NDLAVTYFFHQAVDDVKKGYIKAEEKSYQLQKLYEQRKMVMYLNMLRTC) are FERM-like region F2. The tract at residues 425-525 (NEIIFPHCAC…RVFCELKWRK (101 aa)) is FERM-like region F3.

As to quaternary structure, core component of the SNX27-retromer, a multiprotein complex composed of SNX27, the WASH complex and the retromer complex. Interacts (via PDZ domain) with a number of target transmembrane proteins (via PDZ-binding motif): ABCC4, ADRB2, ARHGEF7, GRIA1, GRIA2, GRIN1, GRIN2A GRIN2C, KCNJ6, KCNJ9 and SLC2A1/GLUT1. Interacts (via the FERM-like regions) with the WASH complex. Interacts with SNX1. Interacts with CYTIP. Interacts with DGKZ. Interacts with MCC. Interacts (via PDZ domains) with SLC9A3; directs SLC9A3 membrane insertion from early endosomes to the plasma membrane.

Its subcellular location is the early endosome membrane. The protein localises to the cytoplasm. It is found in the cytosol. In terms of biological role, involved in the retrograde transport from endosome to plasma membrane, a trafficking pathway that promotes the recycling of internalized transmembrane proteins. Following internalization, endocytosed transmembrane proteins are delivered to early endosomes and recycled to the plasma membrane instead of being degraded in lysosomes. SNX27 specifically binds and directs sorting of a subset of transmembrane proteins containing a PDZ-binding motif at the C-terminus: following interaction with target transmembrane proteins, associates with the retromer complex, preventing entry into the lysosomal pathway, and promotes retromer-tubule based plasma membrane recycling. SNX27 also binds with the WASH complex. Interacts with membranes containing phosphatidylinositol-3-phosphate (PtdIns(3P)). May participate in establishment of natural killer cell polarity. Recruits CYTIP to early endosomes. The protein is Sorting nexin-27 (SNX27) of Bos taurus (Bovine).